The sequence spans 603 residues: Phosphogluconate dehydratase (603 aa).

[4Fe-4S] cluster is bound by residues Cys-154 and Cys-221.

It belongs to the IlvD/Edd family. [4Fe-4S] cluster is required as a cofactor.

The catalysed reaction is 6-phospho-D-gluconate = 2-dehydro-3-deoxy-6-phospho-D-gluconate + H2O. It participates in carbohydrate metabolism; Entner-Doudoroff pathway. Its function is as follows. Catalyzes the dehydration of 6-phospho-D-gluconate to 2-dehydro-3-deoxy-6-phospho-D-gluconate. The sequence is that of Phosphogluconate dehydratase from Escherichia coli O157:H7.